We begin with the raw amino-acid sequence, 264 residues long: Thiazole synthase (264 aa).

Catalysis depends on lysine 106, which acts as the Schiff-base intermediate with DXP. 1-deoxy-D-xylulose 5-phosphate-binding positions include glycine 167, 193 to 194 (AG), and 215 to 216 (NS).

This sequence belongs to the ThiG family. In terms of assembly, homotetramer. Forms heterodimers with either ThiH or ThiS.

Its subcellular location is the cytoplasm. It catalyses the reaction [ThiS sulfur-carrier protein]-C-terminal-Gly-aminoethanethioate + 2-iminoacetate + 1-deoxy-D-xylulose 5-phosphate = [ThiS sulfur-carrier protein]-C-terminal Gly-Gly + 2-[(2R,5Z)-2-carboxy-4-methylthiazol-5(2H)-ylidene]ethyl phosphate + 2 H2O + H(+). It functions in the pathway cofactor biosynthesis; thiamine diphosphate biosynthesis. Catalyzes the rearrangement of 1-deoxy-D-xylulose 5-phosphate (DXP) to produce the thiazole phosphate moiety of thiamine. Sulfur is provided by the thiocarboxylate moiety of the carrier protein ThiS. In vitro, sulfur can be provided by H(2)S. This Prochlorococcus marinus (strain AS9601) protein is Thiazole synthase.